Consider the following 418-residue polypeptide: Gamma-glutamyl phosphate reductase (418 aa).

Belongs to the gamma-glutamyl phosphate reductase family.

The protein resides in the cytoplasm. It carries out the reaction L-glutamate 5-semialdehyde + phosphate + NADP(+) = L-glutamyl 5-phosphate + NADPH + H(+). Its pathway is amino-acid biosynthesis; L-proline biosynthesis; L-glutamate 5-semialdehyde from L-glutamate: step 2/2. Its function is as follows. Catalyzes the NADPH-dependent reduction of L-glutamate 5-phosphate into L-glutamate 5-semialdehyde and phosphate. The product spontaneously undergoes cyclization to form 1-pyrroline-5-carboxylate. The chain is Gamma-glutamyl phosphate reductase from Clostridium acetobutylicum (strain ATCC 824 / DSM 792 / JCM 1419 / IAM 19013 / LMG 5710 / NBRC 13948 / NRRL B-527 / VKM B-1787 / 2291 / W).